The chain runs to 322 residues: Extracellular metalloprotease AFUA_1G07730 (322 aa).

The first 22 residues, 1 to 22, serve as a signal peptide directing secretion; sequence MLPFNSCVYVLLIISLMSNCRA. Residues N123 and N197 are each glycosylated (N-linked (GlcNAc...) asparagine). H233 contacts Zn(2+). The active site involves E234. Position 237 (H237) interacts with Zn(2+). Cysteines 272 and 299 form a disulfide.

It belongs to the peptidase M43B family.

The protein localises to the secreted. In terms of biological role, secreted metalloproteinase that allows assimilation of proteinaceous substrates. Plays a pivotal role as a pathogenicity determinant during infections and contributes to the ability of the pathogen to persist within the mammalian host. The polypeptide is Extracellular metalloprotease AFUA_1G07730 (Aspergillus fumigatus (strain ATCC MYA-4609 / CBS 101355 / FGSC A1100 / Af293) (Neosartorya fumigata)).